The sequence spans 151 residues: Protein INO4 (151 aa).

The 53-residue stretch at 45 to 97 (QIRINHVSSEKKRRELERAIFDELVAVVPDLQPQESRSELIIYLKSLSYLSWL) folds into the bHLH domain. Residues 112–137 (HEAKTGSSSSSDPVQEQNGNIRDLVP) are disordered. Over residues 116–131 (TGSSSSSDPVQEQNGN) the composition is skewed to polar residues.

Efficient DNA binding requires dimerization with another bHLH protein.

The protein localises to the nucleus. In terms of biological role, transcriptional activator of phospholipid synthetic genes (such as INO1, CHO1/PSS, CHO2/PEM1, OPI3/PEM2, etc.). The sequence is that of Protein INO4 (INO4) from Saccharomyces cerevisiae (strain ATCC 204508 / S288c) (Baker's yeast).